The following is a 57-amino-acid chain: Large ribosomal subunit protein bL32 (57 aa).

Residues 1 to 22 form a disordered region; the sequence is MAVPKKKTSKSKRDKRRATWRH.

The protein belongs to the bacterial ribosomal protein bL32 family.

In Nostoc punctiforme (strain ATCC 29133 / PCC 73102), this protein is Large ribosomal subunit protein bL32.